A 115-amino-acid chain; its full sequence is U3-lycotoxin-Ls1j (115 aa).

Residues 1-20 (MKFVLLFGVFLVTLFSYSSA) form the signal peptide. Residues 21 to 44 (EMLDDFDQADEDELLSLIEKEEAR) constitute a propeptide that is removed on maturation. 4 disulfide bridges follow: Cys-48–Cys-63, Cys-55–Cys-72, Cys-62–Cys-87, and Cys-74–Cys-85.

This sequence belongs to the neurotoxin 19 (CSTX) family. 01 subfamily. In terms of tissue distribution, expressed by the venom gland.

It localises to the secreted. In Lycosa singoriensis (Wolf spider), this protein is U3-lycotoxin-Ls1j.